The chain runs to 339 residues: HTH-type transcriptional regulator KdgR (339 aa).

Residues 9 to 64 form the HTH lacI-type domain; the sequence is TTIKDVAECAGVSKSTVSRYINGKIDAISPEKVKNIKKAIAELNYRPSKMAQGLKI. The H-T-H motif DNA-binding region spans 11–30; that stretch reads IKDVAECAGVSKSTVSRYIN.

Its function is as follows. Transcriptional repressor of the kdgRKAT and kduID operons for pectin utilization. The sequence is that of HTH-type transcriptional regulator KdgR (kdgR) from Bacillus subtilis (strain 168).